The chain runs to 218 residues: N-(5'-phosphoribosyl)anthranilate isomerase (218 aa).

The protein belongs to the TrpF family.

It catalyses the reaction N-(5-phospho-beta-D-ribosyl)anthranilate = 1-(2-carboxyphenylamino)-1-deoxy-D-ribulose 5-phosphate. The protein operates within amino-acid biosynthesis; L-tryptophan biosynthesis; L-tryptophan from chorismate: step 3/5. The sequence is that of N-(5'-phosphoribosyl)anthranilate isomerase from Rhodospirillum rubrum (strain ATCC 11170 / ATH 1.1.1 / DSM 467 / LMG 4362 / NCIMB 8255 / S1).